Here is a 1271-residue protein sequence, read N- to C-terminus: Diacylglycerol kinase kappa (1271 aa).

Residues 1 to 15 (MDRGAAAAQGTAPPQ) are compositionally biased toward low complexity. Positions 1–160 (MDRGAAAAQG…PEPTPEPVTE (160 aa)) are disordered. The span at 23–44 (SPEPPPPWPPPPPPPAPPPAPP) shows a compositional bias: pro residues. 33 tandem repeats follow at residues 48-51 (EASP), 52-55 (EPIP), 56-59 (EPCP), 60-63 (ELAP), 64-67 (GPCP), 68-71 (EATS), 72-75 (ESAT), 76-79 (ELYT), 80-83 (EPTP), 84-87 (EPAT), 88-91 (EPAS), 92-95 (EPAP), 96-99 (EPAT), 100-103 (EPAP), 104-107 (EPAT), 108-111 (EPAP), 112-115 (EPAP), 116-119 (EPAT), 120-123 (ESAP), 124-127 (EPTP), 128-131 (EPAL), 132-135 (ESVP), 136-139 (EPAP), 140-143 (ELTP), 144-147 (EVAP), 148-151 (ELAP), 152-155 (EPTP), 156-159 (EPVT), 160-163 (ELAP), 164-167 (EFCP), 168-171 (EAAP), 172-175 (EFRP), and 176-179 (SPAP). The 33 X 4 AA approximate tandem repeats of E-P-A-P stretch occupies residues 48–179 (EASPEPIPEP…APEFRPSPAP (132 aa)). Residues 52-66 (EPIPEPCPELAPGPC) are compositionally biased toward pro residues. Y78 carries the phosphotyrosine modification. The span at 82-116 (TPEPATEPASEPAPEPATEPAPEPATEPAPEPAPE) shows a compositional bias: pro residues. Positions 139-149 (PELTPEVAPEL) are enriched in low complexity. The segment at 190–209 (ERGLKTSPSPSPSPSPRTPM) is disordered. The region spanning 216 to 309 (KILKEGPMLK…WINIIKTIQQ (94 aa)) is the PH domain. 2 consecutive Phorbol-ester/DAG-type zinc fingers follow at residues 327–377 (MHCW…SKDC) and 398–449 (PHQW…SKEC). One can recognise a DAGKc domain in the interval 487-622 (ACSCPLLIFI…LDRWSVMIRE (136 aa)). Disordered stretches follow at residues 805-825 (DDPE…GTLS) and 1252-1271 (RHRE…RSQL). Positions 1199–1268 (PIFVPEEKSS…EGDDPLTPSR (70 aa)) are required for localization to the plasma membrane.

The protein belongs to the eukaryotic diacylglycerol kinase family. In terms of assembly, does not form homooligomers. Phosphorylated at Tyr-78 by some member of the SRC family in response to H(2)O(2). In terms of tissue distribution, expressed in testis, and to a lesser extent in placenta.

It is found in the cell membrane. The catalysed reaction is a 1,2-diacyl-sn-glycerol + ATP = a 1,2-diacyl-sn-glycero-3-phosphate + ADP + H(+). The enzyme catalyses 1,2-di-(9Z-octadecenoyl)-sn-glycerol + ATP = 1,2-di-(9Z-octadecenoyl)-sn-glycero-3-phosphate + ADP + H(+). Its pathway is lipid metabolism; glycerolipid metabolism. With respect to regulation, inhibited in response to H(2)O(2). Functionally, diacylglycerol kinase that converts diacylglycerol/DAG into phosphatidic acid/phosphatidate/PA and regulates the respective levels of these two bioactive lipids. Thereby, acts as a central switch between the signaling pathways activated by these second messengers with different cellular targets and opposite effects in numerous biological processes. The polypeptide is Diacylglycerol kinase kappa (Homo sapiens (Human)).